The sequence spans 430 residues: Putative membrane fusion protein SilB (430 aa).

The first 28 residues, 1-28, serve as a signal peptide directing secretion; the sequence is MASLKIKYAAIIISSLIAGGLISVTAWQ. A disordered region spans residues 407-430; it reads RHPEKTENSMPAMSEQPVNMHSGH. Polar residues predominate over residues 414 to 430; that stretch reads NSMPAMSEQPVNMHSGH.

Belongs to the membrane fusion protein (MFP) (TC 8.A.1) family.

In terms of biological role, component of the sil cation efflux system that confers resistance to silver. May be part of a three-component cation/proton antiporter. The sequence is that of Putative membrane fusion protein SilB (silB) from Salmonella typhimurium.